Reading from the N-terminus, the 420-residue chain is Probable endo-beta-1,4-glucanase celB (420 aa).

Positions Met-1–Gly-18 are cleaved as a signal peptide. Asn-118 is a glycosylation site (N-linked (GlcNAc...) asparagine). Catalysis depends on Glu-215, which acts as the Nucleophile. Glu-220 acts as the Proton donor in catalysis. N-linked (GlcNAc...) asparagine glycosylation is found at Asn-234, Asn-293, and Asn-383.

Belongs to the glycosyl hydrolase 7 (cellulase C) family.

Its subcellular location is the secreted. The enzyme catalyses Endohydrolysis of (1-&gt;4)-beta-D-glucosidic linkages in cellulose, lichenin and cereal beta-D-glucans.. In terms of biological role, has endoglucanase activity on substrates containing beta-1,4 glycosidic bonds, like in carboxymethylcellulose (CMC), hydroxyethylcellulose (HEC) and beta-glucan. Involved in the degradation of complex natural cellulosic substrates. The protein is Probable endo-beta-1,4-glucanase celB (celB) of Aspergillus terreus (strain NIH 2624 / FGSC A1156).